We begin with the raw amino-acid sequence, 216 residues long: 3,4-dihydroxy-2-butanone 4-phosphate synthase (216 aa).

D-ribulose 5-phosphate-binding positions include 33 to 34, Asp38, 146 to 150, and Glu170; these read RE and RRGHT. Glu34 is a binding site for Mg(2+). Mg(2+) is bound at residue His149.

This sequence belongs to the DHBP synthase family. In terms of assembly, homodimer. Requires Mg(2+) as cofactor. It depends on Mn(2+) as a cofactor.

The catalysed reaction is D-ribulose 5-phosphate = (2S)-2-hydroxy-3-oxobutyl phosphate + formate + H(+). The protein operates within cofactor biosynthesis; riboflavin biosynthesis; 2-hydroxy-3-oxobutyl phosphate from D-ribulose 5-phosphate: step 1/1. Its function is as follows. Catalyzes the conversion of D-ribulose 5-phosphate to formate and 3,4-dihydroxy-2-butanone 4-phosphate. This Pseudomonas putida (strain ATCC 47054 / DSM 6125 / CFBP 8728 / NCIMB 11950 / KT2440) protein is 3,4-dihydroxy-2-butanone 4-phosphate synthase.